We begin with the raw amino-acid sequence, 83 residues long: Protein WFDC9 (83 aa).

Positions 1 to 24 (MKPWIIVLTVSAHGILVFLHVLGS) are cleaved as a signal peptide.

It is found in the secreted. This chain is Protein WFDC9 (Wfdc9), found in Mus musculus (Mouse).